A 318-amino-acid chain; its full sequence is Receptor homology region, transmembrane domain- and RING domain-containing protein 5 (318 aa).

Residues 1–20 (MNYSWITIMSLLVICKLASA) form the signal peptide. Residues 22–163 (VVLIGKNTIL…IPGFGISSWS (142 aa)) lie on the Lumenal side of the membrane. Cys-62 and Cys-87 are joined by a disulfide. One can recognise a PA domain in the interval 70-143 (EKRSKYRSSY…RASGEVLKGY (74 aa)). Asn-121 carries N-linked (GlcNAc...) asparagine glycosylation. A helical membrane pass occupies residues 164–184 (IMGITFISLLAMSAILATCFV). The Cytoplasmic portion of the chain corresponds to 185–318 (VRRHQIRQSV…DLPIVVRVYL (134 aa)). An RING-type; atypical zinc finger spans residues 233–275 (CAICIDDYCVGEKLRILPCKHKYHAVCIDSWLGRCRSFCPVCK).

Its subcellular location is the prevacuolar compartment membrane. It localises to the protein storage vacuole membrane. Its function is as follows. Involved in the trafficking of vacuolar proteins. May function as a sorting receptor for protein trafficking to the protein storage vacuole (PSV). The chain is Receptor homology region, transmembrane domain- and RING domain-containing protein 5 (RMR5) from Arabidopsis thaliana (Mouse-ear cress).